The sequence spans 373 residues: Queuine tRNA-ribosyltransferase (373 aa).

The active-site Proton acceptor is the D89. Residues 89 to 93, D143, Q192, and G220 each bind substrate; that span reads DSGGF. The tract at residues 251–257 is RNA binding; that stretch reads GVGTPED. D270 serves as the catalytic Nucleophile. Residues 275 to 279 form an RNA binding; important for wobble base 34 recognition region; that stretch reads TRNAR. Zn(2+) is bound by residues C308, C310, C313, and H339.

This sequence belongs to the queuine tRNA-ribosyltransferase family. As to quaternary structure, homodimer. Within each dimer, one monomer is responsible for RNA recognition and catalysis, while the other monomer binds to the replacement base PreQ1. Zn(2+) serves as cofactor.

It carries out the reaction 7-aminomethyl-7-carbaguanine + guanosine(34) in tRNA = 7-aminomethyl-7-carbaguanosine(34) in tRNA + guanine. It functions in the pathway tRNA modification; tRNA-queuosine biosynthesis. In terms of biological role, catalyzes the base-exchange of a guanine (G) residue with the queuine precursor 7-aminomethyl-7-deazaguanine (PreQ1) at position 34 (anticodon wobble position) in tRNAs with GU(N) anticodons (tRNA-Asp, -Asn, -His and -Tyr). Catalysis occurs through a double-displacement mechanism. The nucleophile active site attacks the C1' of nucleotide 34 to detach the guanine base from the RNA, forming a covalent enzyme-RNA intermediate. The proton acceptor active site deprotonates the incoming PreQ1, allowing a nucleophilic attack on the C1' of the ribose to form the product. After dissociation, two additional enzymatic reactions on the tRNA convert PreQ1 to queuine (Q), resulting in the hypermodified nucleoside queuosine (7-(((4,5-cis-dihydroxy-2-cyclopenten-1-yl)amino)methyl)-7-deazaguanosine). This Aliarcobacter butzleri (strain RM4018) (Arcobacter butzleri) protein is Queuine tRNA-ribosyltransferase.